Here is a 491-residue protein sequence, read N- to C-terminus: Nucleoporin NUP42 (491 aa).

The C3H1-type zinc finger occupies methionine 1–glycine 25. Disordered stretches follow at residues proline 23–tyrosine 82 and threonine 92–glycine 111. The segment covering arginine 33 to tyrosine 64 has biased composition (polar residues). FG repeat units follow at residues phenylalanine 110–glycine 111, phenylalanine 259–glycine 260, phenylalanine 302–glycine 303, phenylalanine 312–glycine 313, phenylalanine 333–glycine 334, phenylalanine 342–glycine 343, phenylalanine 363–glycine 364, phenylalanine 375–glycine 376, phenylalanine 379–glycine 380, and phenylalanine 410–glycine 411.

Probable component of the nuclear pore complex (NPC).

It localises to the nucleus. The protein resides in the nuclear pore complex. Its subcellular location is the nucleus membrane. Its function is as follows. Required for the export of mRNAs containing poly(A) tails from the nucleus into the cytoplasm. The sequence is that of Nucleoporin NUP42 (nup42) from Xenopus laevis (African clawed frog).